The sequence spans 1133 residues: DNA-directed RNA polymerase subunit beta (1133 aa).

A disordered region spans residues 1085–1133 (ADVSSRHTPSRPTYESVTSEDLSPAAGGTFTLARRSREEDEDREEEDDF). The segment covering 1090–1105 (RHTPSRPTYESVTSED) has biased composition (polar residues). Positions 1123–1133 (EDEDREEEDDF) are enriched in acidic residues.

Belongs to the RNA polymerase beta chain family. In terms of assembly, in cyanobacteria the RNAP catalytic core is composed of 2 alpha, 1 beta, 1 beta', 1 gamma and 1 omega subunit. When a sigma factor is associated with the core the holoenzyme is formed, which can initiate transcription.

The catalysed reaction is RNA(n) + a ribonucleoside 5'-triphosphate = RNA(n+1) + diphosphate. Its function is as follows. DNA-dependent RNA polymerase catalyzes the transcription of DNA into RNA using the four ribonucleoside triphosphates as substrates. The protein is DNA-directed RNA polymerase subunit beta of Synechococcus sp. (strain JA-3-3Ab) (Cyanobacteria bacterium Yellowstone A-Prime).